A 459-amino-acid chain; its full sequence is MRASWVANRQGKSNVSQLHFARQGMITEEMAYVANRENLPESLVMEEVARGRMIIPANINHLNLEPMAIGIASKCKVNANIGASPNASDVGEELKKLELAVKYGADTVMDLSTGGVNLDEVRTAIINASPVPIGTVPVYQALESVHGSIEKLSEEDFLHIIEKHCQQGVDYQTIHAGLLIEHLPKVKGRLTGIVSRGGGILAQWMLYHHKQNPLFSRFDDICEIFKRYDCSFSLGDSLRPGCLHDASDEAQLAELKTLGQLTKRAWAHDIQVMVEGPGHVPMDQIEFNVRKQMEDCSEAPFYVLGPLVTDIAPGYDHITSAIGAAMAGWYGTAMLCYVTPKEHLGLPNPEDVREGLIAYKIAAHAADIARHRSGARDRDDELSKARYAFDWNKQFELSLDPERARQYHDETLPADIYKQAEFCSMCGPKHCPMQTKITDKDLDDLEDVIKSKDASKINL.

Residues Asn80, Met109, Tyr139, His175, 195–197, 236–239, and Glu275 each bind substrate; these read SRG and DSLR. A Zn(2+)-binding site is contributed by His279. Tyr302 contributes to the substrate binding site. His343 contributes to the Zn(2+) binding site. Cys423, Cys426, and Cys431 together coordinate [4Fe-4S] cluster.

The protein belongs to the ThiC family. The cofactor is [4Fe-4S] cluster.

The enzyme catalyses 5-amino-1-(5-phospho-beta-D-ribosyl)imidazole + S-adenosyl-L-methionine = 4-amino-2-methyl-5-(phosphooxymethyl)pyrimidine + CO + 5'-deoxyadenosine + formate + L-methionine + 3 H(+). Its pathway is cofactor biosynthesis; thiamine diphosphate biosynthesis. Catalyzes the synthesis of the hydroxymethylpyrimidine phosphate (HMP-P) moiety of thiamine from aminoimidazole ribotide (AIR) in a radical S-adenosyl-L-methionine (SAM)-dependent reaction. This chain is Phosphomethylpyrimidine synthase, found in Prochlorococcus marinus (strain MIT 9211).